The sequence spans 463 residues: Cysteine--tRNA ligase (463 aa).

C29 contacts Zn(2+). A 'HIGH' region motif is present at residues 31-41 (PTVYNYAHIGN). Residues C211, H236, and E240 each contribute to the Zn(2+) site. The 'KMSKS' region motif lies at 269–273 (KMSKS). K272 contacts ATP.

The protein belongs to the class-I aminoacyl-tRNA synthetase family. As to quaternary structure, monomer. The cofactor is Zn(2+).

The protein localises to the cytoplasm. It catalyses the reaction tRNA(Cys) + L-cysteine + ATP = L-cysteinyl-tRNA(Cys) + AMP + diphosphate. The sequence is that of Cysteine--tRNA ligase from Caulobacter vibrioides (strain ATCC 19089 / CIP 103742 / CB 15) (Caulobacter crescentus).